The following is a 301-amino-acid chain: Tetratricopeptide repeat domain-containing protein PYG7, chloroplastic (301 aa).

A chloroplast-targeting transit peptide spans 1 to 61; the sequence is MFESNMVLQT…FHDYVFAEIS (61 aa). 2 helical membrane passes run 82–102 and 121–141; these read TFLL…AAAA and IQLS…FYVI. TPR repeat units lie at residues 168–201, 206–239, and 240–273; these read ATEL…WDGD, AQVY…QPGY, and VTAW…DPNN.

As to quaternary structure, interacts with PSA3.

Its subcellular location is the plastid. It localises to the chloroplast thylakoid membrane. Nuclear genome-encoded factor required for the accumulation of photosystem I (PSI). Functions as a PSI biogenesis factor. Cooperates with PSA3 to promote the stable assembly of PSI in the thylakoid membrane. May target primarily the PsaC subunit. The sequence is that of Tetratricopeptide repeat domain-containing protein PYG7, chloroplastic from Arabidopsis thaliana (Mouse-ear cress).